A 315-amino-acid chain; its full sequence is Glycine--tRNA ligase alpha subunit (315 aa).

The protein belongs to the class-II aminoacyl-tRNA synthetase family. Tetramer of two alpha and two beta subunits.

It localises to the cytoplasm. The enzyme catalyses tRNA(Gly) + glycine + ATP = glycyl-tRNA(Gly) + AMP + diphosphate. This Pseudomonas putida (strain GB-1) protein is Glycine--tRNA ligase alpha subunit.